Reading from the N-terminus, the 346-residue chain is D-alanine--D-alanine ligase (346 aa).

One can recognise an ATP-grasp domain in the interval 133–327 (KLYAKSVGVK…ALADQISLEK (195 aa)). 159–211 (LSFPCIIKPARLGSSIGISIVKDEKDLEYAKDVGFEFDNDLVVEEFKNNIKEY) contacts ATP. Positions 284, 296, and 298 each coordinate Mg(2+).

The protein belongs to the D-alanine--D-alanine ligase family. Mg(2+) is required as a cofactor. Requires Mn(2+) as cofactor.

Its subcellular location is the cytoplasm. The catalysed reaction is 2 D-alanine + ATP = D-alanyl-D-alanine + ADP + phosphate + H(+). It participates in cell wall biogenesis; peptidoglycan biosynthesis. In terms of biological role, cell wall formation. In Campylobacter jejuni subsp. jejuni serotype O:2 (strain ATCC 700819 / NCTC 11168), this protein is D-alanine--D-alanine ligase.